We begin with the raw amino-acid sequence, 69 residues long: Lantibiotic lichenicidin A2 (69 aa).

The propeptide occupies 1 to 37 (MKNSAAREAFKGANHPAGMVSEEELKALVGGNDVNPE). Thr38 bears the 2-oxobutanoic acid mark. (Z)-2,3-didehydrobutyrine is present on residues Thr39, Thr42, and Thr43. The lanthionine (Ser-Cys) cross-link spans 44-48 (SSWTC). At Ser45 the chain carries 2,3-didehydroalanine (Ser). Residues Thr50 and Thr54 each carry the (Z)-2,3-didehydrobutyrine modification. A cross-link (lanthionine (Ser-Cys)) is located at residues 56–60 (SASLC). Cross-links (beta-methyllanthionine (Thr-Cys)) lie at residues 62–65 (TTKC) and 66–69 (TSRC). Thr63 carries the post-translational modification (Z)-2,3-didehydrobutyrine.

Maturation of lantibiotics involves the enzymatic conversion of Thr, and Ser into dehydrated AA and the formation of thioether bonds with cysteine. This is followed by membrane translocation and cleavage of the modified precursor.

The protein localises to the secreted. The protein resides in the cell wall. Lanthionine-containing peptide antibiotic (lantibiotic) active on Gram-positive bacteria. The bactericidal activity of lantibiotics is based on depolarization of energized bacterial cytoplasmic membranes, initiated by the formation of aqueous transmembrane pores. When present individually, LchA2 exhibits activity towards L.lactis HP. When combined with LchA1, it displays activity towards a broad spectrum of non-pathogenic and pathogenic Gram-positive bacteria including strains of L.monocytogenes, methicillin-resistant S.aureus, S.pneumoniae and strains of vancomycin-resistant enterococci, but not towards E.faecium L4001 and BM4147-1. Combined LchA1 and LchA2 peptides also inhibit Bacillus sp. HIL-Y85/54728, L.lactis DPC3417 and B.halodurans C-125, which produce lantibiotics themselves. Inactivated by proteinase K and pronase E, but not by trypsin and chymotrypsin. The chain is Lantibiotic lichenicidin A2 from Bacillus licheniformis (strain ATCC 14580 / DSM 13 / JCM 2505 / CCUG 7422 / NBRC 12200 / NCIMB 9375 / NCTC 10341 / NRRL NRS-1264 / Gibson 46).